The sequence spans 226 residues: ATP synthase F(0) complex subunit a (226 aa).

A run of 5 helical transmembrane segments spans residues 9–29 (FITPMMLGLPLVTLIILFPSL), 68–88 (WTLMLMSLILFIGSTNLLGLL), 97–117 (QLSMNLGMAIPLWAGAVITGF), 138–158 (IPMLVIIETISLFIQPMALAV), and 184–204 (ISPTTALITFIILILLTILEF).

The protein belongs to the ATPase A chain family. As to quaternary structure, component of the ATP synthase complex composed at least of ATP5F1A/subunit alpha, ATP5F1B/subunit beta, ATP5MC1/subunit c (homooctomer), MT-ATP6/subunit a, MT-ATP8/subunit 8, ATP5ME/subunit e, ATP5MF/subunit f, ATP5MG/subunit g, ATP5MK/subunit k, ATP5MJ/subunit j, ATP5F1C/subunit gamma, ATP5F1D/subunit delta, ATP5F1E/subunit epsilon, ATP5PF/subunit F6, ATP5PB/subunit b, ATP5PD/subunit d, ATP5PO/subunit OSCP. ATP synthase complex consists of a soluble F(1) head domain (subunits alpha(3) and beta(3)) - the catalytic core - and a membrane F(0) domain - the membrane proton channel (subunits c, a, 8, e, f, g, k and j). These two domains are linked by a central stalk (subunits gamma, delta, and epsilon) rotating inside the F1 region and a stationary peripheral stalk (subunits F6, b, d, and OSCP). Interacts with DNAJC30; interaction is direct.

Its subcellular location is the mitochondrion inner membrane. It carries out the reaction H(+)(in) = H(+)(out). Functionally, subunit a, of the mitochondrial membrane ATP synthase complex (F(1)F(0) ATP synthase or Complex V) that produces ATP from ADP in the presence of a proton gradient across the membrane which is generated by electron transport complexes of the respiratory chain. ATP synthase complex consist of a soluble F(1) head domain - the catalytic core - and a membrane F(1) domain - the membrane proton channel. These two domains are linked by a central stalk rotating inside the F(1) region and a stationary peripheral stalk. During catalysis, ATP synthesis in the catalytic domain of F(1) is coupled via a rotary mechanism of the central stalk subunits to proton translocation. With the subunit c (ATP5MC1), forms the proton-conducting channel in the F(0) domain, that contains two crucial half-channels (inlet and outlet) that facilitate proton movement from the mitochondrial intermembrane space (IMS) into the matrix. Protons are taken up via the inlet half-channel and released through the outlet half-channel, following a Grotthuss mechanism. The polypeptide is ATP synthase F(0) complex subunit a (Capra hircus (Goat)).